Consider the following 415-residue polypeptide: Serine hydroxymethyltransferase (415 aa).

Residues leucine 119 and 123 to 125 (GHL) each bind (6S)-5,6,7,8-tetrahydrofolate. The residue at position 228 (lysine 228) is an N6-(pyridoxal phosphate)lysine. 353-355 (SPF) provides a ligand contact to (6S)-5,6,7,8-tetrahydrofolate.

This sequence belongs to the SHMT family. In terms of assembly, homodimer. Pyridoxal 5'-phosphate serves as cofactor.

The protein localises to the cytoplasm. It carries out the reaction (6R)-5,10-methylene-5,6,7,8-tetrahydrofolate + glycine + H2O = (6S)-5,6,7,8-tetrahydrofolate + L-serine. Its pathway is one-carbon metabolism; tetrahydrofolate interconversion. It participates in amino-acid biosynthesis; glycine biosynthesis; glycine from L-serine: step 1/1. Its function is as follows. Catalyzes the reversible interconversion of serine and glycine with tetrahydrofolate (THF) serving as the one-carbon carrier. Also exhibits THF-independent aldolase activity toward beta-hydroxyamino acids, producing glycine and aldehydes, via a retro-aldol mechanism. The sequence is that of Serine hydroxymethyltransferase from Halorubrum lacusprofundi (strain ATCC 49239 / DSM 5036 / JCM 8891 / ACAM 34).